The sequence spans 247 residues: 23S rRNA (guanosine-2'-O-)-methyltransferase RlmB (247 aa).

S-adenosyl-L-methionine is bound by residues glycine 197, isoleucine 217, and leucine 226.

The protein belongs to the class IV-like SAM-binding methyltransferase superfamily. RNA methyltransferase TrmH family. RlmB subfamily.

Its subcellular location is the cytoplasm. The catalysed reaction is guanosine(2251) in 23S rRNA + S-adenosyl-L-methionine = 2'-O-methylguanosine(2251) in 23S rRNA + S-adenosyl-L-homocysteine + H(+). In terms of biological role, specifically methylates the ribose of guanosine 2251 in 23S rRNA. This Vibrio vulnificus (strain CMCP6) protein is 23S rRNA (guanosine-2'-O-)-methyltransferase RlmB.